The sequence spans 192 residues: uncharacterized protein (192 aa).

The signal sequence occupies residues 1 to 18 (MNSKFILKYFILAFFLVS). Cysteine 19 carries the N-palmitoyl cysteine lipid modification. Cysteine 19 carries the S-diacylglycerol cysteine lipid modification.

It is found in the cell membrane. This is an uncharacterized protein from Borreliella burgdorferi (strain ATCC 35210 / DSM 4680 / CIP 102532 / B31) (Borrelia burgdorferi).